A 385-amino-acid polypeptide reads, in one-letter code: m7GpppN-mRNA hydrolase (385 aa).

In terms of domain architecture, Nudix hydrolase spans 95 to 226 (MGVPTYGAII…KLGLAPNKFF (132 aa)). A Nudix box motif is present at residues 129-150 (GKVNKEEAPHDCAAREVFEETG). Glu144 and Glu148 together coordinate Mn(2+). 5 positions are modified to phosphoserine: Ser246, Ser247, Ser249, Ser276, and Ser284. Residues 247–266 (SDSDNGFSSTGSTPAKPTVE) form a disordered region. Residues 249–259 (SDNGFSSTGST) are compositionally biased toward low complexity.

Belongs to the Nudix hydrolase family. DCP2 subfamily. As to quaternary structure, found in a mRNA decay complex with LSM1, LSM3, LSM4, EXOSC2, EXOSC4, EXOSC10, PARN, XRN1, CNOT6, UPF1, UPF2 and UPF3B. Forms a complex with DCP1A, EDC3, DDX6 and EDC4/HEDLS, within this complex directly interacts with EDC4/HEDLS. Interacts with DPC1B, UPF1, UPF2 and UPF3B. Associates with polysomes. Interacts (via N-terminus and C-terminus) with TRIM21 (via N-terminus and C-terminus). Interacts with LIMD1, WTIP and AJUBA. Interacts with DDX17 in an RNA-dependent manner. Interacts with ZC3HAV1. Interacts with APOBEC3G in an RNA-dependent manner. Interacts with ZFP36L1 (via N-terminus). Interacts with NBDY. The cofactor is Mn(2+). Requires Mg(2+) as cofactor.

It localises to the cytoplasm. It is found in the P-body. The protein resides in the nucleus. It catalyses the reaction a 5'-end (N(7)-methyl 5'-triphosphoguanosine)-ribonucleoside in mRNA + H2O = N(7)-methyl-GDP + a 5'-end phospho-ribonucleoside in mRNA + 2 H(+). In terms of biological role, decapping metalloenzyme that catalyzes the cleavage of the cap structure on mRNAs. Removes the 7-methyl guanine cap structure from mRNA molecules, yielding a 5'-phosphorylated mRNA fragment and 7m-GDP. Necessary for the degradation of mRNAs, both in normal mRNA turnover and in nonsense-mediated mRNA decay. Plays a role in replication-dependent histone mRNA degradation. Has higher activity towards mRNAs that lack a poly(A) tail. Has no activity towards a cap structure lacking an RNA moiety. The presence of a N(6)-methyladenosine methylation at the second transcribed position of mRNAs (N(6),2'-O-dimethyladenosine cap; m6A(m)) provides resistance to DCP2-mediated decapping. Blocks autophagy in nutrient-rich conditions by repressing the expression of ATG-related genes through degradation of their transcripts. The chain is m7GpppN-mRNA hydrolase (DCP2) from Pongo abelii (Sumatran orangutan).